The chain runs to 118 residues: Holo-[acyl-carrier-protein] synthase (118 aa).

Mg(2+) is bound by residues Asp-6 and Glu-55.

It belongs to the P-Pant transferase superfamily. AcpS family. Requires Mg(2+) as cofactor.

Its subcellular location is the cytoplasm. It catalyses the reaction apo-[ACP] + CoA = holo-[ACP] + adenosine 3',5'-bisphosphate + H(+). Functionally, transfers the 4'-phosphopantetheine moiety from coenzyme A to a Ser of acyl-carrier-protein. This Chlorobium chlorochromatii (strain CaD3) protein is Holo-[acyl-carrier-protein] synthase.